Reading from the N-terminus, the 204-residue chain is Small ribosomal subunit protein uS4 (204 aa).

Residues 20–46 (WGRPKSPINKREYGPGEHGQRRRKPSD) form a disordered region. Residues 28–38 (NKREYGPGEHG) are compositionally biased toward basic and acidic residues. One can recognise an S4 RNA-binding domain in the interval 93 to 156 (TRLDAVVYRM…RQMPLILEAL (64 aa)).

This sequence belongs to the universal ribosomal protein uS4 family. In terms of assembly, part of the 30S ribosomal subunit. Contacts protein S5. The interaction surface between S4 and S5 is involved in control of translational fidelity.

Functionally, one of the primary rRNA binding proteins, it binds directly to 16S rRNA where it nucleates assembly of the body of the 30S subunit. With S5 and S12 plays an important role in translational accuracy. This chain is Small ribosomal subunit protein uS4, found in Rhodospirillum rubrum (strain ATCC 11170 / ATH 1.1.1 / DSM 467 / LMG 4362 / NCIMB 8255 / S1).